The chain runs to 396 residues: Elongation factor Tu (396 aa).

In terms of domain architecture, tr-type G spans 10–206; the sequence is KPHVNIGTIG…AVDSYIPEPV (197 aa). The G1 stretch occupies residues 19-26; the sequence is GHVDHGKT. Residue 19 to 26 participates in GTP binding; sequence GHVDHGKT. T26 serves as a coordination point for Mg(2+). The segment at 60–64 is G2; the sequence is GITIA. The segment at 81-84 is G3; it reads DCPG. GTP contacts are provided by residues 81–85 and 136–139; these read DCPGH and NKAD. The interval 136-139 is G4; sequence NKAD. The G5 stretch occupies residues 174-176; sequence SAL.

Belongs to the TRAFAC class translation factor GTPase superfamily. Classic translation factor GTPase family. EF-Tu/EF-1A subfamily. Monomer.

It localises to the cytoplasm. The enzyme catalyses GTP + H2O = GDP + phosphate + H(+). GTP hydrolase that promotes the GTP-dependent binding of aminoacyl-tRNA to the A-site of ribosomes during protein biosynthesis. The sequence is that of Elongation factor Tu from Geotalea uraniireducens (strain Rf4) (Geobacter uraniireducens).